A 128-amino-acid chain; its full sequence is Small ribosomal subunit protein bS6 (128 aa).

The disordered stretch occupies residues 97 to 128; sequence TTPSPMMKEEKSRSLTAAPATDEAKPAEAESA. Residues 118 to 128 show a composition bias toward basic and acidic residues; it reads DEAKPAEAESA.

Belongs to the bacterial ribosomal protein bS6 family.

Binds together with bS18 to 16S ribosomal RNA. The chain is Small ribosomal subunit protein bS6 from Aromatoleum aromaticum (strain DSM 19018 / LMG 30748 / EbN1) (Azoarcus sp. (strain EbN1)).